Consider the following 335-residue polypeptide: Glycerol-3-phosphate dehydrogenase [NAD(P)+] (335 aa).

Ser-12, Trp-13, and Lys-107 together coordinate NADPH. 3 residues coordinate sn-glycerol 3-phosphate: Lys-107, Gly-138, and Ser-140. Residue Ala-142 coordinates NADPH. Sn-glycerol 3-phosphate-binding residues include Lys-193, Asp-246, Ser-256, Arg-257, and Asn-258. Lys-193 acts as the Proton acceptor in catalysis. Arg-257 is a binding site for NADPH. NADPH-binding residues include Val-281 and Glu-283.

It belongs to the NAD-dependent glycerol-3-phosphate dehydrogenase family.

Its subcellular location is the cytoplasm. The catalysed reaction is sn-glycerol 3-phosphate + NAD(+) = dihydroxyacetone phosphate + NADH + H(+). It carries out the reaction sn-glycerol 3-phosphate + NADP(+) = dihydroxyacetone phosphate + NADPH + H(+). The protein operates within membrane lipid metabolism; glycerophospholipid metabolism. Catalyzes the reduction of the glycolytic intermediate dihydroxyacetone phosphate (DHAP) to sn-glycerol 3-phosphate (G3P), the key precursor for phospholipid synthesis. The sequence is that of Glycerol-3-phosphate dehydrogenase [NAD(P)+] from Geobacter sp. (strain M21).